We begin with the raw amino-acid sequence, 172 residues long: Ly6/PLAUR domain-containing protein 6B (172 aa).

Positions 1-25 (MLLLCHILAVTILQILIISENWVFA) are cleaved as a signal peptide. A UPAR/Ly6 domain is found at 46–137 (FKCFTCENAG…VELPTNHTNA (92 aa)). Positions 46–140 (FKCFTCENAG…PTNHTNAVFA (95 aa)) are sufficient for inhibiting alpha-7 nAChR currents. 6 disulfide bridges follow: Cys48/Cys76, Cys51/Cys60, Cys69/Cys95, Cys101/Cys120, Cys106/Cys117, and Cys121/Cys126. Ser148 carries the GPI-anchor amidated serine lipid modification. The propeptide at 149–172 (GSSVSSVPSPYLLVLAWLFMLPLL) is removed in mature form.

Its subcellular location is the cell membrane. Functionally, likely acts as a modulator of nicotinic acetylcholine receptors (nAChRs) activity. In vitro acts on nAChRs in a subtype- and stoichiometry-dependent manner. Modulates specifically alpha-3(3):beta-4(2) nAChRs by enhancing the sensitivity to ACh, decreasing ACh-induced maximal current response and increasing the rate of desensitization to ACh; has no effect on alpha-7 homomeric nAChRs; modulates alpha-3(2):alpha-5:beta-4(2) nAChRs in the context of CHRNA5/alpha-5 variant Asn-398 but not its wild-type sequence. However, according to another report in vitro it can weakly inhibits alpha-7 nAChRs. The polypeptide is Ly6/PLAUR domain-containing protein 6B (Lypd6b) (Mus musculus (Mouse)).